We begin with the raw amino-acid sequence, 150 residues long: 1,4-dihydroxy-2-naphthoyl-CoA hydrolase (150 aa).

The active site involves Asp19.

This sequence belongs to the 4-hydroxybenzoyl-CoA thioesterase family. DHNA-CoA hydrolase subfamily.

The catalysed reaction is 1,4-dihydroxy-2-naphthoyl-CoA + H2O = 1,4-dihydroxy-2-naphthoate + CoA + H(+). It participates in cofactor biosynthesis; phylloquinone biosynthesis. The protein operates within quinol/quinone metabolism; 1,4-dihydroxy-2-naphthoate biosynthesis; 1,4-dihydroxy-2-naphthoate from chorismate: step 7/7. Its function is as follows. Catalyzes the hydrolysis of 1,4-dihydroxy-2-naphthoyl-CoA (DHNA-CoA) to 1,4-dihydroxy-2-naphthoate (DHNA), a reaction involved in phylloquinone (vitamin K1) biosynthesis. This chain is 1,4-dihydroxy-2-naphthoyl-CoA hydrolase, found in Prochlorococcus marinus (strain MIT 9312).